Reading from the N-terminus, the 227-residue chain is Lipoprotein-releasing system ATP-binding protein LolD (227 aa).

The region spanning 5–227 (LICQNITKHY…QDGILRESNS (223 aa)) is the ABC transporter domain. Position 41–48 (41–48 (GSSGSGKS)) interacts with ATP.

This sequence belongs to the ABC transporter superfamily. Lipoprotein translocase (TC 3.A.1.125) family. The complex is composed of two ATP-binding proteins (LolD) and two transmembrane proteins (LolC and LolE).

Its subcellular location is the cell inner membrane. Part of the ABC transporter complex LolCDE involved in the translocation of mature outer membrane-directed lipoproteins, from the inner membrane to the periplasmic chaperone, LolA. Responsible for the formation of the LolA-lipoprotein complex in an ATP-dependent manner. The sequence is that of Lipoprotein-releasing system ATP-binding protein LolD from Histophilus somni (strain 129Pt) (Haemophilus somnus).